The following is a 122-amino-acid chain: Ribosome-binding factor A (122 aa).

It belongs to the RbfA family. Monomer. Binds 30S ribosomal subunits, but not 50S ribosomal subunits or 70S ribosomes.

It localises to the cytoplasm. One of several proteins that assist in the late maturation steps of the functional core of the 30S ribosomal subunit. Associates with free 30S ribosomal subunits (but not with 30S subunits that are part of 70S ribosomes or polysomes). Required for efficient processing of 16S rRNA. May interact with the 5'-terminal helix region of 16S rRNA. The protein is Ribosome-binding factor A of Burkholderia thailandensis (strain ATCC 700388 / DSM 13276 / CCUG 48851 / CIP 106301 / E264).